Reading from the N-terminus, the 539-residue chain is Chaperone Ric-8A (539 aa).

The segment at 507–539 (MGITPSGNLAPMENAIRDMADERSSSDSDLGLD) is disordered. The segment covering 521-532 (AIRDMADERSSS) has biased composition (basic and acidic residues).

This sequence belongs to the synembryn family.

It localises to the cytoplasm. It is found in the cell cortex. In terms of biological role, chaperone that specifically binds and folds nascent G alpha proteins prior to G protein heterotrimer formation, promoting their stability and activity: folds GNAI1, GNAO1, GNA13 and GNAQ. Does not fold G(s) G-alpha proteins GNAS nor GNAL. Also acts as a guanine nucleotide exchange factor (GEF) for G alpha proteins by stimulating exchange of bound GDP for free GTP. The protein is Chaperone Ric-8A (RIC8A) of Gallus gallus (Chicken).